Here is a 667-residue protein sequence, read N- to C-terminus: Probable endo-1,3(4)-beta-glucanase AFLA_105200 (667 aa).

A signal peptide spans 1–24 (MSSSSFVWTVGSIALSSLITPTIA). A GH16 domain is found at 25 to 288 (DGSGSRYQLT…WAGGVFGDSG (264 aa)). Asparagine 63 carries an N-linked (GlcNAc...) asparagine glycan. Glutamate 144 functions as the Nucleophile in the catalytic mechanism. Residue glutamate 149 is the Proton donor of the active site. Polar residues-rich tracts occupy residues 354 to 363 (VPSVTSTPIL) and 379 to 394 (ATSS…QTSV). 2 disordered regions span residues 354 to 427 (VPSV…ADAV) and 448 to 646 (GTIQ…AGAS). 3 stretches are compositionally biased toward low complexity: residues 395 to 427 (AGAE…ADAV), 448 to 483 (GTIQ…SQEP), and 574 to 622 (APTS…EATA). Residues 623–637 (PTETDSGASTGTNPE) show a composition bias toward polar residues. A lipid anchor (GPI-anchor amidated glycine) is attached at glycine 644. A propeptide spans 645 to 667 (ASKSVGISGLAGIVCGIAMAMLA) (removed in mature form).

This sequence belongs to the glycosyl hydrolase 16 family.

The protein localises to the cell membrane. It catalyses the reaction Endohydrolysis of (1-&gt;3)- or (1-&gt;4)-linkages in beta-D-glucans when the glucose residue whose reducing group is involved in the linkage to be hydrolyzed is itself substituted at C-3.. In terms of biological role, mixed-linked glucanase involved in the degradation of complex natural cellulosic substrates. This chain is Probable endo-1,3(4)-beta-glucanase AFLA_105200, found in Aspergillus flavus (strain ATCC 200026 / FGSC A1120 / IAM 13836 / NRRL 3357 / JCM 12722 / SRRC 167).